Here is a 150-residue protein sequence, read N- to C-terminus: Large ribosomal subunit protein uL11 (150 aa).

Belongs to the universal ribosomal protein uL11 family. In terms of assembly, part of the ribosomal stalk of the 50S ribosomal subunit. Interacts with L10 and the large rRNA to form the base of the stalk. L10 forms an elongated spine to which L12 dimers bind in a sequential fashion forming a multimeric L10(L12)X complex. One or more lysine residues are methylated.

Functionally, forms part of the ribosomal stalk which helps the ribosome interact with GTP-bound translation factors. This chain is Large ribosomal subunit protein uL11, found in Cereibacter sphaeroides (strain ATCC 17025 / ATH 2.4.3) (Rhodobacter sphaeroides).